A 482-amino-acid polypeptide reads, in one-letter code: UDP-glucose 6-dehydrogenase 2 (482 aa).

NAD(+) contacts are provided by residues 8-13 (GAGYVG), Asp33, Arg38, 86-90 (VNTPT), 127-128 (ST), and Glu163. Residues 159-163 (EFLAE), 218-225 (KLAANAFL), and 258-271 (RIGP…VGFG) contribute to the substrate site. Cys274 (nucleophile) is an active-site residue. 274–277 (CFQK) is a binding site for NAD(+). Residue 336 to 337 (FK) participates in substrate binding. NAD(+) is bound at residue Arg344. Ser395 bears the Phosphoserine mark. Residue Arg449 coordinates substrate.

Belongs to the UDP-glucose/GDP-mannose dehydrogenase family.

It carries out the reaction UDP-alpha-D-glucose + 2 NAD(+) + H2O = UDP-alpha-D-glucuronate + 2 NADH + 3 H(+). The protein operates within nucleotide-sugar biosynthesis; UDP-alpha-D-glucuronate biosynthesis; UDP-alpha-D-glucuronate from UDP-alpha-D-glucose: step 1/1. Involved in the biosynthesis of UDP-glucuronic acid (UDP-GlcA), providing nucleotide sugars for cell-wall polymers. This is UDP-glucose 6-dehydrogenase 2 (UGD2) from Oryza sativa subsp. japonica (Rice).